The chain runs to 254 residues: Phosphate import ATP-binding protein PstB (254 aa).

One can recognise an ABC transporter domain in the interval 7 to 249; the sequence is MVAESMSFYY…PREKQTEDYI (243 aa). 39–46 is an ATP binding site; the sequence is GPSGCGKS.

It belongs to the ABC transporter superfamily. Phosphate importer (TC 3.A.1.7) family. In terms of assembly, the complex is composed of two ATP-binding proteins (PstB), two transmembrane proteins (PstC and PstA) and a solute-binding protein (PstS).

The protein localises to the cell inner membrane. The enzyme catalyses phosphate(out) + ATP + H2O = ADP + 2 phosphate(in) + H(+). Functionally, part of the ABC transporter complex PstSACB involved in phosphate import. Responsible for energy coupling to the transport system. The sequence is that of Phosphate import ATP-binding protein PstB from Chlorobium chlorochromatii (strain CaD3).